The sequence spans 127 residues: MORF4 family-associated protein 1 (127 aa).

Residues 92 to 126 (RAAKRCEKAEEKAKEIAKMAEMLVELVRRIEKSES) are a coiled coil.

The protein belongs to the MORF4 family-associated protein family. Found in a complex composed of MORF4L1, MRFAP1 and RB1. Interacts via its N-terminus with MORF4L1. Interacts with CSTB and MORF4L2.

The protein localises to the nucleus. The protein resides in the cytoplasm. It localises to the perinuclear region. The sequence is that of MORF4 family-associated protein 1 from Homo sapiens (Human).